We begin with the raw amino-acid sequence, 137 residues long: Large ribosomal subunit protein uL16 (137 aa).

It belongs to the universal ribosomal protein uL16 family. As to quaternary structure, part of the 50S ribosomal subunit.

Binds 23S rRNA and is also seen to make contacts with the A and possibly P site tRNAs. The polypeptide is Large ribosomal subunit protein uL16 (Mesoplasma florum (strain ATCC 33453 / NBRC 100688 / NCTC 11704 / L1) (Acholeplasma florum)).